We begin with the raw amino-acid sequence, 62 residues long: Protein translocase subunit SecE (62 aa).

The helical transmembrane segment at 40 to 60 (LLVLAVVGVLAYIIQLALTLI) threads the bilayer.

The protein belongs to the SecE/SEC61-gamma family. Component of the Sec protein translocase complex. Heterotrimer consisting of SecY (alpha), SecG (beta) and SecE (gamma) subunits. The heterotrimers can form oligomers, although 1 heterotrimer is thought to be able to translocate proteins. Interacts with the ribosome. May interact with SecDF, and other proteins may be involved.

The protein resides in the cell membrane. Essential subunit of the Sec protein translocation channel SecYEG. Clamps together the 2 halves of SecY. May contact the channel plug during translocation. The chain is Protein translocase subunit SecE from Saccharolobus solfataricus (strain ATCC 35092 / DSM 1617 / JCM 11322 / P2) (Sulfolobus solfataricus).